The following is a 642-amino-acid chain: Kinesin-like protein KIN-7L (642 aa).

The region spanning 3–337 is the Kinesin motor domain; that stretch reads KISVAVRFRP…LQFASRAKCV (335 aa). A compositionally biased stretch (low complexity) spans 12 to 27; sequence PPTTAAPAADQSPSST. The interval 12 to 33 is disordered; the sequence is PPTTAAPAADQSPSSTGGDREW. An ATP-binding site is contributed by 94 to 101; sequence GQTSSGKT. Coiled coils occupy residues 343–428 and 540–612; these read VNEI…SNTS and RQQL…FSQA.

The protein belongs to the TRAFAC class myosin-kinesin ATPase superfamily. Kinesin family. KIN-7 subfamily.

This is Kinesin-like protein KIN-7L from Oryza sativa subsp. japonica (Rice).